A 460-amino-acid polypeptide reads, in one-letter code: uncharacterized protein (460 aa).

This is an uncharacterized protein from Haemophilus influenzae (strain ATCC 51907 / DSM 11121 / KW20 / Rd).